A 176-amino-acid chain; its full sequence is NAD(P)H-quinone oxidoreductase subunit 6, chloroplastic (176 aa).

5 helical membrane passes run 10-30 (ILML…VLLT), 33-53 (IYSA…YFLL), 60-80 (VAQL…AVMF), 95-115 (IGDG…MTTI), and 152-172 (FYLP…GAIT).

The protein belongs to the complex I subunit 6 family. As to quaternary structure, NDH is composed of at least 16 different subunits, 5 of which are encoded in the nucleus.

The protein localises to the plastid. The protein resides in the chloroplast thylakoid membrane. It carries out the reaction a plastoquinone + NADH + (n+1) H(+)(in) = a plastoquinol + NAD(+) + n H(+)(out). It catalyses the reaction a plastoquinone + NADPH + (n+1) H(+)(in) = a plastoquinol + NADP(+) + n H(+)(out). Its function is as follows. NDH shuttles electrons from NAD(P)H:plastoquinone, via FMN and iron-sulfur (Fe-S) centers, to quinones in the photosynthetic chain and possibly in a chloroplast respiratory chain. The immediate electron acceptor for the enzyme in this species is believed to be plastoquinone. Couples the redox reaction to proton translocation, and thus conserves the redox energy in a proton gradient. The chain is NAD(P)H-quinone oxidoreductase subunit 6, chloroplastic (ndhG) from Hordeum vulgare (Barley).